The primary structure comprises 147 residues: Large ribosomal subunit protein uL13 (147 aa).

The disordered stretch occupies residues 126–147; sequence GGPEHPHAAQNPQPYEITQIAQ.

It belongs to the universal ribosomal protein uL13 family. In terms of assembly, part of the 50S ribosomal subunit.

Functionally, this protein is one of the early assembly proteins of the 50S ribosomal subunit, although it is not seen to bind rRNA by itself. It is important during the early stages of 50S assembly. The sequence is that of Large ribosomal subunit protein uL13 from Cutibacterium acnes (strain DSM 16379 / KPA171202) (Propionibacterium acnes).